Reading from the N-terminus, the 335-residue chain is MSTEGGFGSTSSSDAQQSLQSFWPRVMEEIRNLTVKDFRVQELPLARIKKIMKLDEDVKMISAEAPVLFAKAAQIFITELTLRAWIHTEDNKRRTLQRNDIAMAITKFDQFDFLIDIVPRDELKPPKRQEEVRQSVTPAEPVQYYFTLAQQPTAVQVQGQQQGQQTTSSTTTIQPGQIIIAQPQQGQTTPVTMQVGEGQQVQIVQAQPQGQAQQAQSGTGQTMQVMQQIITNTGEIQQIPVQLNAGQLQYIRLAQPVSGTQVVQGQIQTLATNAQQITQTEVQQGQQQFSQFTDGQQLYQIQQVTMPAGQDLAQPMFIQSANQPSDGQTPQVTGD.

It belongs to the NFYC/HAP5 subunit family. As to quaternary structure, heterotrimeric transcription factor composed of three components, NF-YA, NF-YB and NF-YC. NF-YB and NF-YC must interact and dimerize for NF-YA association and DNA binding.

It is found in the nucleus. Its function is as follows. Component of the sequence-specific heterotrimeric transcription factor (NF-Y) which specifically recognizes a 5'-CCAAT-3' box motif found in the promoters of its target genes. NF-Y can function as both an activator and a repressor, depending on its interacting cofactors. In Rattus norvegicus (Rat), this protein is Nuclear transcription factor Y subunit gamma (Nfyc).